The chain runs to 286 residues: Flagellin FlaB1 (286 aa).

Residues 231-286 (LDIAAENLQAAESRIRDANIAKQMVEYTKNQVLTQSGTAMLAQANTSAQSILSILR) are required for interaction with FliW.

The protein belongs to the bacterial flagellin family. In terms of assembly, the flagellum consists of an outer layer composed of repeating units of FlaA around a core that contains several antigenically related polypeptides. Interacts via its C-terminus with FliW; a synthetic peptide of residues 229-247 partially blocks binding to FliW.

Its subcellular location is the periplasmic flagellum. It is found in the periplasm. Its function is as follows. Component of the core of the flagella. The sequence is that of Flagellin FlaB1 (flaB1) from Treponema pallidum (strain Nichols).